A 203-amino-acid polypeptide reads, in one-letter code: uncharacterized protein (203 aa).

A run of 3 helical transmembrane segments spans residues 60 to 80, 114 to 134, and 157 to 177; these read IIDM…FFLY, WFQL…YFCT, and LQLG…ALIL. An ATP-binding site is contributed by 192-199; it reads GAMSEGKT.

Its subcellular location is the membrane. This is an uncharacterized protein from Saccharomyces cerevisiae (strain ATCC 204508 / S288c) (Baker's yeast).